We begin with the raw amino-acid sequence, 256 residues long: Probable succinate transporter subunit YjjP (256 aa).

Over 1-113 (MQTEQQRAVT…KRFSQIQPLR (113 aa)) the chain is Cytoplasmic. A helical membrane pass occupies residues 114–135 (YPRWLVALMVGLSCACFCKLNN). Residues 136-140 (GGWDG) lie on the Periplasmic side of the membrane. Residues 141–158 (AVITFFASTTAMYIRQLL) form a helical membrane-spanning segment. Over 159–168 (AQRHLHPQIN) the chain is Cytoplasmic. A helical transmembrane segment spans residues 169–189 (FCLTAFAATTISGLLLQLPTF). The Periplasmic segment spans residues 190-194 (SNTPT). The helical transmembrane segment at 195-215 (IAMAASVLLLVPGFPLINAVA) threads the bilayer. Topologically, residues 216 to 228 (DMFKGHINTGLAR) are cytoplasmic. Residues 229–249 (WAIASLLTLATCVGVVMALTI) traverse the membrane as a helical segment. Residues 250–256 (WGLRGWV) lie on the Periplasmic side of the membrane.

Belongs to the ThrE exporter (TC 2.A.79) family. As to quaternary structure, the transporter is composed of YjjB and YjjP.

The protein resides in the cell inner membrane. Functionally, involved in succinate export with YjjB. Both proteins are required for export. Contributes to succinate production under both aerobic and anaerobic conditions. This Escherichia coli (strain K12) protein is Probable succinate transporter subunit YjjP (yjjP).